The chain runs to 591 residues: MSGACREVVTLQLGHYSNFIGTHWWNLQDAGLVYDADVPAGELQSDVLFREGLTLAGHVTYTPRLIAIDLKGSLQTLRKEGSLYDTENENSAFTWDGQIMTHQESPPSKNSFLQELDNLDTGGVLAESDFNHLTSSVDNCSVPGASVAVETINSSLERIQKSYRLEGSVRVWSDFLRLHLHPRTISVINQYNHDGESERLEVFGQGEALLQGQVLEDLEDRLHFFIEECDYLQGFQVLCDLTDGFSGLGSKVTEYLQDSYGGRGILTWGVAPVNHPDTSSMKDLYHMMNCALGTLQMANHSSLFCPLTLRGGLCRRPPPPTAFPLLNCDPLLWYHSSSVLALALDALTVSYRMRHCSATMWQLSDALTTSGRKVVSAYGSVPFPMMLGGCLPDALDAFSNAVPWRSLSACPEISDRRFCFSQSVTLKGVDEQSLVSRLLPGMEAPSPLHYERSGEDVLSAYVRSHYPSSPLAVQLVSSGSKVTPPFPQIFSPSLSAQGFLQSHSTPASPSCPPVSCLPVLTSLQSSPAVGLQLSELQRACASLDLRRVAPSFLTHGPEHAEISEYLEQLRNLAHCYRQSHSRSSSEEDDDD.

The protein belongs to the misato family.

It is found in the mitochondrion outer membrane. It localises to the cytoplasm. Functionally, involved in the regulation of mitochondrial distribution and morphology. Required for mitochondrial fusion and mitochondrial network formation. The protein is Protein misato homolog 1 (msto1) of Danio rerio (Zebrafish).